The sequence spans 578 residues: Octopamine receptor 2 (578 aa).

Over 1–84 (MMSFPIALFA…YDSITIFITV (84 aa)) the chain is Extracellular. N-linked (GlcNAc...) asparagine glycosylation is found at N13, N38, N46, and N59. The chain crosses the membrane as a helical span at residues 85–107 (AVVLTLITLWTILGNFFVLMALY). Over 108–117 (RYGTLRTMSN) the chain is Cytoplasmic. Residues 118–139 (CLIGNLAISDLLLAVTVLPIST) form a helical membrane-spanning segment. At 140–156 (VHDLLGYWVFGEFTCTL) the chain is on the extracellular side. A disulfide bridge links C154 with C239. The helical transmembrane segment at 157–177 (WLCMDVLYCTASIWGLCTVAF) threads the bilayer. Over 178–197 (DRYLATVYPVWYHDQRSVRK) the chain is Cytoplasmic. The chain crosses the membrane as a helical span at residues 198–220 (AVGCIVFVWIFSIVISFAPFIGW). Residues 221 to 251 (QHMIPSFFSFNASIQRYQCILFTSSSYVLYS) are Extracellular-facing. Residue N231 is glycosylated (N-linked (GlcNAc...) asparagine). A helical membrane pass occupies residues 252 to 272 (SMGSFVIPAILMAFMYVRIFV). Topologically, residues 273 to 495 (VLHNQSRGVK…ELREQRATKR (223 aa)) are cytoplasmic. The chain crosses the membrane as a helical span at residues 496–517 (MLLIMACFCVCWMPFLFMYILR). Residues 518 to 531 (SVCDTCHMNQHFVA) are Extracellular-facing. Residues 532 to 553 (AIIWLGYVNSSLNPVLYTLFND) form a helical membrane-spanning segment. At 554–578 (DFKVAFKRLIGARSPSAYRSPGPRR) the chain is on the cytoplasmic side.

Belongs to the G-protein coupled receptor 1 family.

It localises to the cell membrane. In terms of biological role, receptor for octopamine. Octopamine (OA) is a neurotransmitter, neurohormone, and neuromodulator in invertebrates. This receptor induces a long lasting opening of voltage- independent chloride channels, a process which seems to involve protein phosphorylation but does not require either cAPK or PKC. The rank order of potency for agonists is p-synephrine &gt; p-octopamine &gt; xylometazoline &gt; B-HT920 &gt; norepinephrine = clonidine &gt; epinephrine &gt; p-tyramine &gt; phenylephrine = oxymetazoline = mehoxamine = dopamine &gt; serotonin &gt; histamine. For antagonists, the rank order is rauwolscine = mianserin &gt; phentolamine &gt; chlorpromazine &gt; spiperone &gt; yohimbine &gt; propanolol &gt; alprenolol &gt; prazosine &gt; pindolol. The protein is Octopamine receptor 2 of Lymnaea stagnalis (Great pond snail).